Reading from the N-terminus, the 66-residue chain is Photosystem II reaction center protein J (66 aa).

The tract at residues 1-25 is disordered; it reads MSGKKSPYPDGRIPDRNPDGTPAVP. Residues 37–57 traverse the membrane as a helical segment; that stretch reads LWLVATAGGMAVLFVVGLFFY.

It belongs to the PsbJ family. As to quaternary structure, PSII is composed of 1 copy each of membrane proteins PsbA, PsbB, PsbC, PsbD, PsbE, PsbF, PsbH, PsbI, PsbJ, PsbK, PsbL, PsbM, PsbT, PsbX, PsbY, PsbZ, Psb30/Ycf12, peripheral proteins PsbO, CyanoQ (PsbQ), PsbU, PsbV and a large number of cofactors. It forms dimeric complexes.

Its subcellular location is the cellular thylakoid membrane. One of the components of the core complex of photosystem II (PSII). PSII is a light-driven water:plastoquinone oxidoreductase that uses light energy to abstract electrons from H(2)O, generating O(2) and a proton gradient subsequently used for ATP formation. It consists of a core antenna complex that captures photons, and an electron transfer chain that converts photonic excitation into a charge separation. The chain is Photosystem II reaction center protein J from Synechococcus sp. (strain CC9605).